Reading from the N-terminus, the 454-residue chain is G-protein coupled receptor 39 (454 aa).

Over 1–34 (MASPSHPSRDCSQVIDHSHVPEFEVATWIKITLI) the chain is Extracellular. 2 disulfides stabilise this stretch: Cys-11–Cys-191 and Cys-108–Cys-210. Zn(2+) contacts are provided by His-17 and His-19. A helical membrane pass occupies residues 35–55 (LVYLVIFVVGILGNSVTIRVT). Topologically, residues 56-69 (QVLQKKGYLQKEVT) are cytoplasmic. A helical transmembrane segment spans residues 70–89 (DHMVSLACSDILVFLIGMPM). Residues 90 to 109 (EFYSIIWNPLTTPSYTVSCK) are Extracellular-facing. Residues 110–131 (VHTFLFEACSYATLLHVLTLSF) traverse the membrane as a helical segment. At 132–151 (ERYIAICHPFRYKAMSGPCQ) the chain is on the cytoplasmic side. A helical transmembrane segment spans residues 152 to 172 (VKLLIGFVWVTSALVALPLLF). The Extracellular segment spans residues 173-217 (AMGVEYPLVNVPSHRGLICNRSRTRHQEQPESSNMSICTNLSSRW). N-linked (GlcNAc...) asparagine glycosylation is found at Asn-192, Asn-206, and Asn-212. A helical membrane pass occupies residues 218 to 242 (TVFQSSIFSAFVVYLVVLVSVAFMC). The Cytoplasmic segment spans residues 243 to 283 (WSMMQVLRRSKQGTLAAQGQQLQLRKLESQESRSARRQTII). A helical transmembrane segment spans residues 284–305 (FLELIVVTLAVCWMPNQVRRIM). Residues 306–323 (AAAKPKHDWTKSYFRAYM) lie on the Extracellular side of the membrane. A helical membrane pass occupies residues 324-344 (ILLPFSDTFFYLSSVVNPLLY). At 345 to 454 (NVSSQQFRSV…TRNGFQEHEV (110 aa)) the chain is on the cytoplasmic side. Ser-397 is modified (phosphoserine). The disordered stretch occupies residues 415–454 (HSEAKPESKPQELSCESPEPNSERKPANPATRNGFQEHEV).

The protein belongs to the G-protein coupled receptor 1 family. Interacts with HTR1A. Interacts with GALR1. Detected in liver, kidney, abomasum, uterus, small intestine and colon.

It is found in the cell membrane. In terms of biological role, zinc-sensing receptor that can sense changes in extracellular Zn(2+), mediate Zn(2+) signal transmission, and participates in the regulation of numerous physiological processes including glucose homeostasis regulation, gastrointestinal mobility, hormone secretion and cell death. Activation by Zn(2+) in keratinocytes increases the intracellular concentration of Ca(2+) and activates the ERK/MAPK and PI3K/AKT signaling pathways leading to epithelial repair. Plays an essential role in normal wound healing by inducing the production of cytokines including the major inflammatory cytokine IL6 via the PKC/MAPK/CEBPB pathway. Regulates adipose tissue metabolism, especially lipolysis, and regulates the function of lipases, such as hormone-sensitive lipase and adipose triglyceride lipase. Plays a role in the inhibition of cell death and protects against oxidative, endoplasmic reticulum and mitochondrial stress by inducing secretion of the cytoprotective pigment epithelium-derived growth factor (PEDF) and probably other protective transcripts in a GNA13/RHOA/SRE-dependent manner. Forms dynamic heteroreceptor complexes with HTR1A and GALR1 depending on cell type or specific physiological states, resulting in signaling diversity: HTR1A-GPR39 shows additive increase in signaling along the serum response element (SRE) and NF-kappa-B pathways while GALR1 acts as an antagonist blocking SRE. The protein is G-protein coupled receptor 39 (GPR39) of Bos taurus (Bovine).